The primary structure comprises 88 residues: uncharacterized protein (88 aa).

A signal peptide spans 1-25 (MRAAFWVGCAALLLSACSSEPVQQA).

This is an uncharacterized protein from Escherichia coli O6:H1 (strain CFT073 / ATCC 700928 / UPEC).